The chain runs to 147 residues: Small ribosomal subunit protein uS5 (147 aa).

Residues 9 to 72 form the S5 DRBM domain; sequence FEEVIVDIGR…DDAFKNIIHV (64 aa).

Belongs to the universal ribosomal protein uS5 family. As to quaternary structure, part of the 30S ribosomal subunit. Contacts proteins S4 and S8.

Functionally, with S4 and S12 plays an important role in translational accuracy. Located at the back of the 30S subunit body where it stabilizes the conformation of the head with respect to the body. The sequence is that of Small ribosomal subunit protein uS5 from Campylobacter concisus (strain 13826).